Reading from the N-terminus, the 133-residue chain is ATP synthase epsilon chain, chloroplastic (133 aa).

It belongs to the ATPase epsilon chain family. F-type ATPases have 2 components, CF(1) - the catalytic core - and CF(0) - the membrane proton channel. CF(1) has five subunits: alpha(3), beta(3), gamma(1), delta(1), epsilon(1). CF(0) has three main subunits: a, b and c.

It localises to the plastid. The protein localises to the chloroplast thylakoid membrane. In terms of biological role, produces ATP from ADP in the presence of a proton gradient across the membrane. In Daucus carota (Wild carrot), this protein is ATP synthase epsilon chain, chloroplastic.